Reading from the N-terminus, the 493-residue chain is Amphoterin-induced protein 1 (493 aa).

The first 27 residues, Met-1–Ala-27, serve as a signal peptide directing secretion. Residues Gly-28–Ser-61 form the LRRNT domain. Residues Gly-28–Thr-372 are Extracellular-facing. 2 cysteine pairs are disulfide-bonded: Cys-34–Cys-40 and Cys-38–Cys-47. LRR repeat units follow at residues Tyr-62–Thr-83, Gln-87–Pro-108, Asn-111–Asp-132, Val-135–Asp-156, Gln-159–Lys-179, and Lys-186–Gln-206. N-linked (GlcNAc...) asparagine glycosylation is present at Asn-72. Residues Asn-221–Glu-272 form the LRRCT domain. Intrachain disulfides connect Cys-225/Cys-253, Cys-227/Cys-270, and Cys-290/Cys-341. 4 N-linked (GlcNAc...) asparagine glycosylation sites follow: Asn-264, Asn-315, Asn-349, and Asn-360. The region spanning Asn-269–Ser-353 is the Ig-like C2-type domain. A helical transmembrane segment spans residues Ala-373 to Leu-393. At Thr-394–Val-493 the chain is on the cytoplasmic side. Positions Lys-405–Val-493 are disordered. A compositionally biased stretch (polar residues) spans Ser-408–Asn-424. Residues Gly-431 to Ala-442 show a composition bias toward basic and acidic residues. Ser-477 and Ser-481 each carry phosphoserine.

Belongs to the immunoglobulin superfamily. AMIGO family. Homodimer, and heterodimer with AMIGO2 and AMIGO3. Interacts with KCNB1.

The protein localises to the cell membrane. The protein resides in the perikaryon. It localises to the cell projection. Its subcellular location is the dendrite. It is found in the axon. In terms of biological role, promotes growth and fasciculation of neurites from cultured hippocampal neurons. May be involved in fasciculation as well as myelination of developing neural axons. May have a role in regeneration as well as neural plasticity in the adult nervous system. May mediate homophilic as well as heterophilic cell-cell interaction and contribute to signal transduction through its intracellular domain. Assembled with KCNB1 modulates the gating characteristics of the delayed rectifier voltage-dependent potassium channel KCNB1. The chain is Amphoterin-induced protein 1 from Homo sapiens (Human).